We begin with the raw amino-acid sequence, 95 residues long: Protein TusB (95 aa).

It belongs to the DsrH/TusB family. In terms of assembly, heterohexamer, formed by a dimer of trimers. The hexameric TusBCD complex contains 2 copies each of TusB, TusC and TusD. The TusBCD complex interacts with TusE.

It is found in the cytoplasm. Its function is as follows. Part of a sulfur-relay system required for 2-thiolation of 5-methylaminomethyl-2-thiouridine (mnm(5)s(2)U) at tRNA wobble positions. The sequence is that of Protein TusB from Escherichia coli O45:K1 (strain S88 / ExPEC).